The primary structure comprises 259 residues: UBX domain-containing protein 2A (259 aa).

The interval 1–151 is required for interaction with CHRNA3; sequence MKDVDNLKSI…SATPKIVSKA (151 aa). Residues 1-164 are required for inhibition of CHRNA3 ubiquitination and translocation of CHRNA3 to the plasma membrane resulting in an increase in acetylcholine-gated nicotinic acetylcholine receptor currents; sequence MKDVDNLKSI…EVENKNNLSA (164 aa). In terms of domain architecture, SEP spans 60-124; the sequence is QVDVNIKLWK…VEDKKNEICL (65 aa). The required for interaction with VCP stretch occupies residues 167 to 259; the sequence is LNNLEPITNI…TASFRELSEH (93 aa). The UBX domain maps to 169 to 246; the sequence is NLEPITNIQI…DLQNAVIIQR (78 aa).

As to quaternary structure, part of a complex composed of STUB1/CHIP, VCP/p97, CHRNA3, and UBXN2A that modulates the ubiquitination and endoplasmic reticulum-associated degradation (ERAD) of CHRNA3. Within the complex UBXN2A acts as a scaffold protein required for the interaction of CHRNA3 with VCP/p97, this interaction also inhibits CHRNA3 ubiquitination by STUB1/CHIP and subsequently ERAD. Interacts (via SEP domain) with CHRNA3 and interacts (via UBX domain) with VCP/P97; these interactions are required for the interaction of CHRNA3 with the STUB1-VCP-UBXN2A complex. Interacts with HSPA9/MOT-2 (via SBD domain); the interaction inhibits HSPA9/MOT-2 interaction with and degradation of p53, thereby promotes p53 translocation to the nucleus. Interacts with RICTOR. Post-translationally, ubiquitinated. Expressed in the colon (at protein level).

Its subcellular location is the golgi apparatus. It localises to the endoplasmic reticulum. The protein localises to the perikaryon. It is found in the cell projection. The protein resides in the dendrite. Its subcellular location is the nucleus. It localises to the cytoplasm. Acts to repress the ubiquitination and subsequent endoplasmic reticulum-associated degradation of CHRNA3 by the STUB1-VCP-UBXN2A complex in cortical neurons. Also acts to promote the translocation of CHRNA3 to the plasma membrane and subsequently increases plasma membrane acetylcholine-gated ion-channel activation. Plays a role in the inhibition of STUB1-mediated TP53 degradation, via its interaction with HSPA9 which acts to inhibit TP53 binding to HSPA9. Positively mediates the ubiquitination and proteosomal degradation of RICTOR, may thereby act as a negative regulator of the mTORC2 pathway. The chain is UBX domain-containing protein 2A from Homo sapiens (Human).